We begin with the raw amino-acid sequence, 464 residues long: Integrator complex subunit 12 (464 aa).

Positions 42–98 (GNDSVYRPQPKEVEQPKAMLSKVKPETKASSSTPSSSILSKPLASEKVKKEAEKRTA) are disordered. Positions 69 to 84 (KASSSTPSSSILSKPL) are enriched in low complexity. The segment covering 85 to 98 (ASEKVKKEAEKRTA) has biased composition (basic and acidic residues). The PHD-type zinc-finger motif lies at 156–212 (GLACVVCRQMTVFSGNQLVECQECHNLYHQDCHRPQVTDKDVNDPRLVWYCARCTRQ). Disordered regions lie at residues 216–252 (MAQK…LKSK) and 312–445 (TNSQ…SQLN). The segment covering 227–239 (PAPSAVSAVTPVA) has biased composition (low complexity). Residues 312–329 (TNSQATSGKPPSLSSVQK) are compositionally biased toward polar residues. A compositionally biased stretch (low complexity) spans 339 to 371 (SKAGSVSKSGSGGSSSTIPLKPLPPLILGKTGL). Positions 372 to 382 (SRSMSSDNVSK) are enriched in polar residues. The span at 384–421 (GLPSPNPSSSGSVSSLSSQLGSNNGSSNTAGSNVNSSN) shows a compositional bias: low complexity. The segment covering 428–445 (SMQQSGAKGPTSQESQLN) has biased composition (polar residues).

It belongs to the Integrator subunit 12 family. Component of the Integrator complex, composed of core subunits INTS1, INTS2, INTS3, INTS4, INTS5, INTS6, INTS7, INTS8, INTS9/RC74, INTS10, INTS11/CPSF3L, INTS12, INTS13, INTS14 and INTS15. The core complex associates with protein phosphatase 2A subunits PPP2CA and PPP2R1A, to form the Integrator-PP2A (INTAC) complex.

It is found in the nucleus. Its function is as follows. Component of the integrator complex, a multiprotein complex that terminates RNA polymerase II (Pol II) transcription in the promoter-proximal region of genes. The integrator complex provides a quality checkpoint during transcription elongation by driving premature transcription termination of transcripts that are unfavorably configured for transcriptional elongation: the complex terminates transcription by (1) catalyzing dephosphorylation of the C-terminal domain (CTD) of Pol II subunit POLR2A/RPB1 and SUPT5H/SPT5, (2) degrading the exiting nascent RNA transcript via endonuclease activity and (3) promoting the release of Pol II from bound DNA. The integrator complex is also involved in terminating the synthesis of non-coding Pol II transcripts, such as enhancer RNAs (eRNAs), small nuclear RNAs (snRNAs), telomerase RNAs and long non-coding RNAs (lncRNAs). This is Integrator complex subunit 12 (ints12) from Xenopus laevis (African clawed frog).